The following is a 494-amino-acid chain: uncharacterized protein (494 aa).

2 VOC domains span residues 18–174 (FIDC…FINR) and 229–408 (SLDH…FGIL). Residues His-232, His-349, and Glu-460 each coordinate Fe cation.

The protein belongs to the 4HPPD family. The cofactor is Fe cation.

Functionally, may have dioxygenase activity. This is an uncharacterized protein from Dictyostelium discoideum (Social amoeba).